Reading from the N-terminus, the 246-residue chain is Orotidine 5'-phosphate decarboxylase (246 aa).

Residues aspartate 22, lysine 44, aspartate 71 to threonine 80, threonine 130, arginine 191, glutamine 201, glycine 221, and arginine 222 each bind substrate. Lysine 73 functions as the Proton donor in the catalytic mechanism.

This sequence belongs to the OMP decarboxylase family. Type 1 subfamily. As to quaternary structure, homodimer.

It catalyses the reaction orotidine 5'-phosphate + H(+) = UMP + CO2. It participates in pyrimidine metabolism; UMP biosynthesis via de novo pathway; UMP from orotate: step 2/2. Catalyzes the decarboxylation of orotidine 5'-monophosphate (OMP) to uridine 5'-monophosphate (UMP). The polypeptide is Orotidine 5'-phosphate decarboxylase (Neisseria meningitidis serogroup B (strain ATCC BAA-335 / MC58)).